We begin with the raw amino-acid sequence, 212 residues long: Phosphoribosyl-dephospho-CoA transferase (212 aa).

Residues Asp-139 and Asp-141 contribute to the active site.

It belongs to the MdcG family.

It catalyses the reaction apo-[malonate decarboxylase ACP] + 2'-(5''-triphospho-alpha-D-ribosyl)-3'-dephospho-CoA = holo-[malonate decarboxylase ACP] + diphosphate. Functionally, transfers 2'-(5-triphosphoribosyl)-3'-dephosphocoenzyme-A to the apo-[acyl-carrier-protein] of the malonate decarboxylase to yield holo-[acyl-carrier-protein]. In Azotobacter vinelandii (strain DJ / ATCC BAA-1303), this protein is Phosphoribosyl-dephospho-CoA transferase.